The following is a 432-amino-acid chain: Cyclic 2,3-diphosphoglycerate synthetase (432 aa).

The protein belongs to the cyclic 2,3-diphosphoglycerate synthetase family.

Its subcellular location is the cytoplasm. The catalysed reaction is (2R)-2,3-bisphosphoglycerate + ATP + H(+) = cyclic (2R)-2,3-bisphosphoglycerate + ADP + phosphate. Catalyzes the formation of cyclic 2,3-diphosphoglycerate (cDPG) by formation of an intramolecular phosphoanhydride bond at the expense of ATP. In Thermococcus kodakarensis (strain ATCC BAA-918 / JCM 12380 / KOD1) (Pyrococcus kodakaraensis (strain KOD1)), this protein is Cyclic 2,3-diphosphoglycerate synthetase.